A 266-amino-acid chain; its full sequence is Large ribosomal subunit protein eL8 (266 aa).

Residues 1–11 (MPKGKKAKGKK) are compositionally biased toward basic residues. Disordered regions lie at residues 1 to 28 (MPKG…KKVV) and 105 to 134 (ETKQ…KRPP). The span at 116–130 (ARAEQKAAGKGDAPT) shows a compositional bias: basic and acidic residues.

This sequence belongs to the eukaryotic ribosomal protein eL8 family. As to quaternary structure, component of the large ribosomal subunit.

The protein localises to the cytoplasm. Functionally, component of the large ribosomal subunit. The ribosome is a large ribonucleoprotein complex responsible for the synthesis of proteins in the cell. The polypeptide is Large ribosomal subunit protein eL8 (rpl7a) (Takifugu rubripes (Japanese pufferfish)).